The chain runs to 109 residues: Histidine-rich carboxyl terminus protein 1 (109 aa).

A helical membrane pass occupies residues 13 to 33 (WITGTALAFLMLLWLMALCLF). The segment at 77-109 (TSVGVHHHHHHSPHRLHHHKHHHRHHHAHGARR) is disordered. Residues 81–109 (VHHHHHHSPHRLHHHKHHHRHHHAHGARR) show a composition bias toward basic residues.

It is found in the membrane. This chain is Histidine-rich carboxyl terminus protein 1 (Hrct1), found in Mus musculus (Mouse).